Here is a 524-residue protein sequence, read N- to C-terminus: AAA ATPase forming ring-shaped complexes (524 aa).

Residues 1 to 29 (MGMGQEKHTDAASQSRDPEAVAAHENDQL) form a disordered region. Positions 22-59 (AAHENDQLRQRNHALAKALTRATEELRKAKAQLEQFMA) form a coiled coil. 250–255 (GNGKTL) contacts ATP.

The protein belongs to the AAA ATPase family. In terms of assembly, homohexamer. Assembles into a hexameric ring structure.

This chain is AAA ATPase forming ring-shaped complexes, found in Bifidobacterium animalis subsp. lactis (strain BB-12).